Reading from the N-terminus, the 368-residue chain is Probable multidrug ABC transporter permease YbhR (368 aa).

Residues 1-24 (MFHRLWTLIRKELQSLLREPQTRA) lie on the Cytoplasmic side of the membrane. Residues 25 to 45 (ILILPVLIQVILFPFAATLEV) traverse the membrane as a helical segment. The Periplasmic portion of the chain corresponds to 46–173 (TNATIAIYDE…WYNPNLDYKW (128 aa)). Residues 129 to 366 (AQIAANYLQQ…SAAYAMFRRK (238 aa)) enclose the ABC transmembrane type-2 domain. The chain crosses the membrane as a helical span at residues 174–194 (FVVPSLIAMITTIGVMIVTSL). Over 195 to 222 (SVAREREQGTLDQLLVSPLTTWQIFIGK) the chain is Cytoplasmic. A helical membrane pass occupies residues 223-243 (AVPALIVATFQATIVLAIGIW). Over 244 to 253 (AYQIPFAGSL) the chain is Periplasmic. The helical transmembrane segment at 254-274 (ALFYFTMVIYGLSLVGFGLLI) threads the bilayer. At 275-284 (SSLCSTQQQA) the chain is on the cytoplasmic side. A helical transmembrane segment spans residues 285–305 (FIGVFVFMMPAILLSGYVSPV). The Periplasmic segment spans residues 306 to 339 (ENMPVWLQNLTWINPIRHFTDITKQIYLKDASLD). A helical transmembrane segment spans residues 340 to 360 (IVWNSLWPLLVITATTGSAAY). Residues 361–368 (AMFRRKVM) are Cytoplasmic-facing.

Belongs to the ABC-2 integral membrane protein family. The complex is probably composed of two ATP-binding proteins (YbhF) and two transmembrane proteins (YbhR and YbhS).

The protein localises to the cell inner membrane. In terms of biological role, part of the ABC transporter complex YbhFSR that could be involved in efflux of cefoperazone. Probably involved in the translocation of the substrate across the membrane. This chain is Probable multidrug ABC transporter permease YbhR (ybhR), found in Escherichia coli O157:H7.